The sequence spans 557 residues: Putative glutathione-regulated potassium-efflux system protein KefB (557 aa).

The next 10 helical transmembrane spans lie at 2-22 (LGYLLAGIAIGPWGLGFISDV), 24-44 (EILHFSELGVVFLMFIIGLEL), 56-76 (IFGVGAAQVLLSAALLAGLLM), 84-104 (AAVVGGIGFAMSSTAMALQLM), 121-141 (VLLFQDLAVIPALALVPLLAG), 146-166 (HFDWMKIGMKVLEFVGMLIGG), 176-196 (FIAASGVREVFTAATLLLVLG), 199-219 (LFMDALGLSMALGTFIAGVLL), 237-257 (GLLLGLFFISVGMSLNLGVLY), and 260-280 (LLWVVISVVVLVAVKILVLYL). The RCK N-terminal domain occupies 356-475 (KPQVIVVGFG…AGVTQFSRET (120 aa)).

This sequence belongs to the monovalent cation:proton antiporter 2 (CPA2) transporter (TC 2.A.37) family. KefB subfamily. Interacts with the regulatory subunit KefG.

It localises to the cell inner membrane. Its function is as follows. Pore-forming subunit of a potassium efflux system that confers protection against electrophiles. Catalyzes K(+)/H(+) antiport. The polypeptide is Putative glutathione-regulated potassium-efflux system protein KefB (Shigella flexneri).